Reading from the N-terminus, the 283-residue chain is ATP phosphoribosyltransferase (283 aa).

The protein belongs to the ATP phosphoribosyltransferase family. Long subfamily. Equilibrium between an active dimeric form, an inactive hexameric form and higher aggregates. Interconversion between the various forms is largely reversible and is influenced by the natural substrates and inhibitors of the enzyme. Mg(2+) serves as cofactor.

Its subcellular location is the cytoplasm. It carries out the reaction 1-(5-phospho-beta-D-ribosyl)-ATP + diphosphate = 5-phospho-alpha-D-ribose 1-diphosphate + ATP. It participates in amino-acid biosynthesis; L-histidine biosynthesis; L-histidine from 5-phospho-alpha-D-ribose 1-diphosphate: step 1/9. Its activity is regulated as follows. Feedback inhibited by histidine. Functionally, catalyzes the condensation of ATP and 5-phosphoribose 1-diphosphate to form N'-(5'-phosphoribosyl)-ATP (PR-ATP). Has a crucial role in the pathway because the rate of histidine biosynthesis seems to be controlled primarily by regulation of HisG enzymatic activity. In Mycobacterium sp. (strain KMS), this protein is ATP phosphoribosyltransferase.